Here is a 134-residue protein sequence, read N- to C-terminus: Cytochrome c-type biogenesis protein CcmE (134 aa).

Topologically, residues 1–7 are cytoplasmic; that stretch reads MKRKYRR. A helical; Signal-anchor for type II membrane protein membrane pass occupies residues 8–28; the sequence is LFVVIITLSIFAGSVVFVLGK. The Periplasmic portion of the chain corresponds to 29–134; that stretch reads LKNNVSFFYT…MPNKYKTNNL (106 aa). H120 and Y124 together coordinate heme.

This sequence belongs to the CcmE/CycJ family.

The protein resides in the cell inner membrane. Functionally, heme chaperone required for the biogenesis of c-type cytochromes. Transiently binds heme delivered by CcmC and transfers the heme to apo-cytochromes in a process facilitated by CcmF and CcmH. The sequence is that of Cytochrome c-type biogenesis protein CcmE from Ehrlichia ruminantium (strain Gardel).